Reading from the N-terminus, the 152-residue chain is Deoxyuridine 5'-triphosphate nucleotidohydrolase (152 aa).

Residues Arg71–Gly73, Asn84, Leu88–Asp90, and Lys98 contribute to the substrate site.

This sequence belongs to the dUTPase family. The cofactor is Mg(2+).

It carries out the reaction dUTP + H2O = dUMP + diphosphate + H(+). It participates in pyrimidine metabolism; dUMP biosynthesis; dUMP from dCTP (dUTP route): step 2/2. In terms of biological role, this enzyme is involved in nucleotide metabolism: it produces dUMP, the immediate precursor of thymidine nucleotides and it decreases the intracellular concentration of dUTP so that uracil cannot be incorporated into DNA. The protein is Deoxyuridine 5'-triphosphate nucleotidohydrolase of Legionella pneumophila subsp. pneumophila (strain Philadelphia 1 / ATCC 33152 / DSM 7513).